The primary structure comprises 58 residues: Birtoxin (58 aa).

In terms of domain architecture, LCN-type CS-alpha/beta spans 3–58 (VPGNYPLDKDGNTYKCFLLGGNEECLNVCKLHGVQYGYCYASKCWCEYLEDDKDSV). 3 disulfide bridges follow: C18/C41, C27/C46, and C31/C48.

In terms of tissue distribution, expressed by the venom gland.

The protein localises to the secreted. In terms of biological role, beta toxins bind voltage-independently at site-4 of sodium channels (Nav) and shift the voltage of activation toward more negative potentials thereby affecting sodium channel activation and promoting spontaneous and repetitive firing. Moderately toxic, but very high abundant. Does not target reptilian channels. Does not produce effect when administered to blowfly and cabbage looper larvae. In mice, produces convulsions, tremors, increased ventilation and, subsequently, death. This Parabuthus transvaalicus (Transvaal thick-tailed scorpion) protein is Birtoxin.